A 1053-amino-acid polypeptide reads, in one-letter code: Phosphoenolpyruvate carboxylase (1053 aa).

Residue His246 is part of the active site. Basic and acidic residues predominate over residues Arg461–Pro473. The tract at residues Arg461–Tyr480 is disordered. The active site involves Lys699.

Belongs to the PEPCase type 1 family. The cofactor is Mg(2+).

It carries out the reaction oxaloacetate + phosphate = phosphoenolpyruvate + hydrogencarbonate. Forms oxaloacetate, a four-carbon dicarboxylic acid source for the tricarboxylic acid cycle. The sequence is that of Phosphoenolpyruvate carboxylase (ppc) from Synechococcus sp. (strain ATCC 27144 / PCC 6301 / SAUG 1402/1) (Anacystis nidulans).